Consider the following 520-residue polypeptide: Cytochrome P450 monooxygenase oblB (520 aa).

A run of 3 helical transmembrane segments spans residues 17-37, 229-249, and 320-340; these read VAVI…RLFL, LFMG…SILA, and IGTG…HIVV. Residue Cys-462 coordinates heme.

It belongs to the cytochrome P450 family. The cofactor is heme.

It localises to the membrane. Its pathway is secondary metabolite biosynthesis; terpenoid biosynthesis. Cytochrome P450 monooxygenase; part of the gene cluster that mediates the biosynthesis of the sesterterpenes ophiobolins, fungal phytotoxins with potential anti-cancer activities. The first step of the pathway is performed by the sesterterpene synthase oblA that possesses both prenyl transferase and terpene cyclase activity, converting isopentenyl diphosphate and dimethylallyl diphosphate into geranylfarnesyl diphosphate (GFPP) and further converting GFPP into ophiobolin F, respectively. Other sesterterpenoids (C(25) terpenoids) are found as minor products of oblA. It is expected that ophiobolin F is then oxidized to ophiobolin A via ophiobolin C and ophiobolin B intermediates by the combined action of the cytochrome P450 monooxygenase oblB and the FAD-dependent oxidoreductase oblC. Although oblB catalyzes multistep oxygenations at C5 and C21/C7 in a relatively efficient manner, it is unable to convert ophiobolin F to ophiobolin C and produces instead several unexpected derivatives. The sequence is that of Cytochrome P450 monooxygenase oblB from Aspergillus clavatus (strain ATCC 1007 / CBS 513.65 / DSM 816 / NCTC 3887 / NRRL 1 / QM 1276 / 107).